A 561-amino-acid chain; its full sequence is Acyl-CoA ligase frbB (561 aa).

ATP is bound by residues 213–221 (TSGTSGAQK), 354–359 (PGWGLT), D437, R456, and K551. The interval 284-354 (DLKRVLGSIA…TLRPKWHLQP (71 aa)) is SBD1. The SBD2 stretch occupies residues 355–417 (GWGLTEGGGA…MKSPSVIAGY (63 aa)).

The protein belongs to the ATP-dependent AMP-binding enzyme family.

It functions in the pathway antifungal biosynthesis. Its function is as follows. Acyl-CoA ligase; part of the gene cluster that mediates the biosynthesis of the antifungal antibiotic FR901469, an inhibitor of beta-1,3-glucansynthase, exerting antifungal activity against the pathogenes Candida albicans and Aspergillus fumigatus. FR901469 is a cyclic depsipeptide containing 12 amino acid residues and a fatty acid chain. The NRPS frbI contains 12 modules responsible for the formation of the depsipeptide backbone which is denoted as Acyl-Thr-Ala-Tyr-Val-4OHPro-Thr-Thr-3OHPro-threo3OHGln-Gly-Thr-Orn-OH (C71H116N14O23). The PKS frbB is probably involved in the production of the hydrocarbon chain, and the acyl-CoA ligase frbC might be involved in the transport of the chain to the peptide ptoduct of frbI. Because FR901469 contains 3 hydroxylated amino acid residues, the 3 oxygenases frbA, frbH, and frbJ might be participating in amino acid hydroxylation. As no thioesterase domains were detected in frbI or frbB, the thioesterases frbD and frbE may instead release and cyclize the products of the NRPS and PKS, respectively. The protein is Acyl-CoA ligase frbB of Dothideomycetidae sp. (strain 11243) (Fungal sp. (strain No.11243)).